Reading from the N-terminus, the 125-residue chain is Large ribosomal subunit protein bL17 (125 aa).

This sequence belongs to the bacterial ribosomal protein bL17 family. As to quaternary structure, part of the 50S ribosomal subunit. Contacts protein L32.

This chain is Large ribosomal subunit protein bL17, found in Marinomonas sp. (strain MWYL1).